Reading from the N-terminus, the 875-residue chain is Leucine--tRNA ligase (875 aa).

Positions 43-53 match the 'HIGH' region motif; sequence PYPSGRIHMGH. A 'KMSKS' region motif is present at residues 633 to 637; that stretch reads KMSKS. Lys-636 serves as a coordination point for ATP.

The protein belongs to the class-I aminoacyl-tRNA synthetase family.

The protein localises to the cytoplasm. The enzyme catalyses tRNA(Leu) + L-leucine + ATP = L-leucyl-tRNA(Leu) + AMP + diphosphate. In Bartonella bacilliformis (strain ATCC 35685 / KC583 / Herrer 020/F12,63), this protein is Leucine--tRNA ligase.